Reading from the N-terminus, the 638-residue chain is Epithelial sodium channel subunit delta (638 aa).

Residues 1–13 (MAEHRSMDGRMEA) show a composition bias toward basic and acidic residues. Residues 1 to 47 (MAEHRSMDGRMEAATRGGSHLQAAAQTPPRPGPPSAPPPPPKEGHQE) form a disordered region. Residues 1–86 (MAEHRSMDGR…CSRGNRLKTT (86 aa)) lie on the Cytoplasmic side of the membrane. Residues 28–41 (PPRPGPPSAPPPPP) are compositionally biased toward pro residues. The chain crosses the membrane as a helical span at residues 87 to 107 (SWGLLSLGALVALCWQLGLLF). Over 108–530 (ERHWHRPVLM…VPQLLSAMGS (423 aa)) the chain is Extracellular. 2 N-linked (GlcNAc...) asparagine glycosylation sites follow: Asn166 and Asn384. The helical transmembrane segment at 531–551 (LCSLWFGASVLSLLELLELLL) threads the bilayer. The Cytoplasmic segment spans residues 552 to 638 (DASALTLVLG…GPQPLETLDT (87 aa)). Positions 574 to 613 (RASPASGASSIKPEASQMPTPAGGTSDDPEPSGPHLPRVM) are disordered.

It belongs to the amiloride-sensitive sodium channel (TC 1.A.6) family. SCNN1D subfamily. As to quaternary structure, can form an alternative heterotrimeric epithelial sodium channel (ENaC), composed of a delta (SCNN1D), beta (SCNN1B), and gamma (SCNN1G) subunit, where the delta (SCNN1D) subunit replaces the alpha (SCNN1A) subunit.

The protein resides in the apical cell membrane. It catalyses the reaction Na(+)(in) = Na(+)(out). With respect to regulation, originally identified and characterized by its inhibition by the diuretic drug amiloride. Potential alternative pore-forming subunit of the epithelial sodium channel (ENaC), capable of replacing the alpha/SCNN1A subunit, creating a more active channel with distinct properties. ENaC functions in epithelial tissues, where it facilitates the electrodiffusion of sodium ions from the extracellular fluid through the apical membrane of cells, with water following osmotically, regulating sodium balance and fluid homeostasis. This subunit could also function independently as a sodium channel or assemble into other tissue-specific heterotrimeric sodium channels. This Pan troglodytes (Chimpanzee) protein is Epithelial sodium channel subunit delta.